Reading from the N-terminus, the 364-residue chain is MWLERLELQHFRNYNQLDIEFHKGLNVFLGENAQGKTNILESIYVLALTRSHRTRTDKDLLQFQEKELSISGLLHRTSGKVPLDIHLTDKGRVTKVNHLKQAKLSNYIGHMNVVLFAPEDLQLIKGAPALRRKFIDVELGQIKPLYLSDLSNYNHVLKQRNTYLKSTDKIDENFLSVLDQQLAEYGSRVIQHRIDFLKKLEEFGNRKVQEISGNREELTIEYQTSIELTDDVNLIDKFLTELEKSRKRDLFKKNTGVGPHRDDVAFFINGMNAHYASQGQHRSLVLSLKLAEIELMKEVTREYPILLLDDVMSELDNNRQIKLLETITDTIQTFITTTSLDHLHKLPDSLKIFHIESGKVTESE.

30-37 (GENAQGKT) provides a ligand contact to ATP.

The protein belongs to the RecF family.

It is found in the cytoplasm. The RecF protein is involved in DNA metabolism; it is required for DNA replication and normal SOS inducibility. RecF binds preferentially to single-stranded, linear DNA. It also seems to bind ATP. This chain is DNA replication and repair protein RecF, found in Streptococcus suis (strain 98HAH33).